The primary structure comprises 45 residues: Photosystem II reaction center protein K (45 aa).

A propeptide spanning residues 1 to 8 (MEAALLLA) is cleaved from the precursor. A helical membrane pass occupies residues 24–44 (LPIIPLFFLALAFVWQAAVGF).

The protein belongs to the PsbK family. In terms of assembly, PSII is composed of 1 copy each of membrane proteins PsbA, PsbB, PsbC, PsbD, PsbE, PsbF, PsbH, PsbI, PsbJ, PsbK, PsbL, PsbM, PsbT, PsbX, PsbY, PsbZ, Psb30/Ycf12, peripheral proteins PsbO, CyanoQ (PsbQ), PsbU, PsbV and a large number of cofactors. It forms dimeric complexes.

The protein localises to the cellular thylakoid membrane. Its function is as follows. One of the components of the core complex of photosystem II (PSII). PSII is a light-driven water:plastoquinone oxidoreductase that uses light energy to abstract electrons from H(2)O, generating O(2) and a proton gradient subsequently used for ATP formation. It consists of a core antenna complex that captures photons, and an electron transfer chain that converts photonic excitation into a charge separation. This is Photosystem II reaction center protein K from Rippkaea orientalis (strain PCC 8801 / RF-1) (Cyanothece sp. (strain PCC 8801)).